The chain runs to 766 residues: Sucrose synthase (766 aa).

The tract at residues 220–698 (MVFNVVILSV…GLLRIKERYT (479 aa)) is GT-B glycosyltransferase.

Belongs to the glycosyltransferase 1 family. Plant sucrose synthase subfamily. As to expression, expressed most predominantly in tap root.

It catalyses the reaction an NDP-alpha-D-glucose + D-fructose = a ribonucleoside 5'-diphosphate + sucrose + H(+). In terms of biological role, sucrose-cleaving enzyme that provides UDP-glucose and fructose for various metabolic pathways. The polypeptide is Sucrose synthase (SS1) (Beta vulgaris (Sugar beet)).